The following is a 952-amino-acid chain: G patch domain-containing protein 1 homolog (952 aa).

6 disordered regions span residues Q104–R127, G165–E233, D320–S345, R370–S432, P660–P711, and V822–H952. Basic and acidic residues predominate over residues R107–D123. Residues R153–G199 enclose the G-patch domain. Residues D214–E233 show a composition bias toward acidic residues. The segment covering P323 to Q333 has biased composition (basic residues). Composition is skewed to basic and acidic residues over residues P375 to P402, Q414 to S432, and I679 to K691. Residues A886–D896 are compositionally biased toward low complexity. Basic residues-rich tracts occupy residues K906–K934 and H941–H952.

The protein belongs to the GPATCH1 family.

The polypeptide is G patch domain-containing protein 1 homolog (Drosophila melanogaster (Fruit fly)).